Consider the following 407-residue polypeptide: BTB/POZ and MATH domain-containing protein 1 (407 aa).

The region spanning 33 to 167 (NGFHEFKICG…ENSLLVRCRV (135 aa)) is the MATH domain. Residues 203–270 (CDVVFQVDGE…IYWDELPDMQ (68 aa)) form the BTB domain.

The protein belongs to the Tdpoz family. As to quaternary structure, homodimer or heterodimer with BPM3, BPM5 and BPM6. Interacts with CUL3A and CUL3B. Interacts with RAP2-4 and RAP2-13. Binds to MYB56 at the promoter of FLOWERING LOCUS T (FT). In terms of tissue distribution, ubiquitous.

It is found in the nucleus. It functions in the pathway protein modification; protein ubiquitination. May act as a substrate-specific adapter of an E3 ubiquitin-protein ligase complex (CUL3-RBX1-BTB) which mediates the ubiquitination and subsequent proteasomal degradation of target proteins. This Arabidopsis thaliana (Mouse-ear cress) protein is BTB/POZ and MATH domain-containing protein 1 (BPM1).